The chain runs to 340 residues: Photosystem II protein D1 (340 aa).

Transmembrane regions (helical) follow at residues Tyr25–Val42, His114–Phe129, and Trp138–Ala152. His114 contacts chlorophyll a. Residue Trp122 participates in pheophytin a binding. The [CaMn4O5] cluster site is built by Asp166 and Glu185. Residues Phe193–Leu214 form a helical membrane-spanning segment. A chlorophyll a-binding site is contributed by His194. A quinone is bound by residues His211 and Ser260–Phe261. His211 provides a ligand contact to Fe cation. Residue His268 coordinates Fe cation. A helical membrane pass occupies residues Phe270 to Leu284. [CaMn4O5] cluster is bound by residues His328, Glu329, Asp338, and Ala340.

The protein belongs to the reaction center PufL/M/PsbA/D family. PSII is composed of 1 copy each of membrane proteins PsbA, PsbB, PsbC, PsbD, PsbE, PsbF, PsbH, PsbI, PsbJ, PsbK, PsbL, PsbM, PsbT, PsbX, PsbY, PsbZ, Psb30/Ycf12, at least 3 peripheral proteins of the oxygen-evolving complex and a large number of cofactors. It forms dimeric complexes. The D1/D2 heterodimer binds P680, chlorophylls that are the primary electron donor of PSII, and subsequent electron acceptors. It shares a non-heme iron and each subunit binds pheophytin, quinone, additional chlorophylls, carotenoids and lipids. D1 provides most of the ligands for the Mn4-Ca-O5 cluster of the oxygen-evolving complex (OEC). There is also a Cl(-1) ion associated with D1 and D2, which is required for oxygen evolution. The PSII complex binds additional chlorophylls, carotenoids and specific lipids. serves as cofactor. Post-translationally, tyr-157 forms a radical intermediate that is referred to as redox-active TyrZ, YZ or Y-Z.

Its subcellular location is the plastid. The protein resides in the chloroplast thylakoid membrane. The catalysed reaction is 2 a plastoquinone + 4 hnu + 2 H2O = 2 a plastoquinol + O2. Photosystem II (PSII) is a light-driven water:plastoquinone oxidoreductase that uses light energy to abstract electrons from H(2)O, generating O(2) and a proton gradient subsequently used for ATP formation. It consists of a core antenna complex that captures photons, and an electron transfer chain that converts photonic excitation into a charge separation. The D1/D2 (PsbA/PsbD) reaction center heterodimer binds P680, the primary electron donor of PSII as well as several subsequent electron acceptors. This is Photosystem II protein D1 from Amphidinium carterae (Dinoflagellate).